We begin with the raw amino-acid sequence, 257 residues long: Aspartate/glutamate leucyltransferase (257 aa).

Belongs to the R-transferase family. Bpt subfamily.

Its subcellular location is the cytoplasm. It carries out the reaction N-terminal L-glutamyl-[protein] + L-leucyl-tRNA(Leu) = N-terminal L-leucyl-L-glutamyl-[protein] + tRNA(Leu) + H(+). The catalysed reaction is N-terminal L-aspartyl-[protein] + L-leucyl-tRNA(Leu) = N-terminal L-leucyl-L-aspartyl-[protein] + tRNA(Leu) + H(+). Its function is as follows. Functions in the N-end rule pathway of protein degradation where it conjugates Leu from its aminoacyl-tRNA to the N-termini of proteins containing an N-terminal aspartate or glutamate. This is Aspartate/glutamate leucyltransferase from Nitrobacter hamburgensis (strain DSM 10229 / NCIMB 13809 / X14).